We begin with the raw amino-acid sequence, 278 residues long: TATA box-binding protein-associated factor RNA polymerase I subunit D (278 aa).

Disordered regions lie at residues 20-71 (ANRS…SSFE) and 88-116 (KKRY…RNPI). Polar residues predominate over residues 22 to 33 (RSDNSSDSSLFK). The residue at position 23 (serine 23) is a Phosphoserine. The segment covering 88–99 (KKRYKKKKKRRY) has biased composition (basic residues). 2 positions are modified to phosphoserine: serine 138 and serine 234.

Component of the transcription factor SL1/TIF-IB complex, composed of TBP and at least TAF1A, TAF1B, TAF1C and TAF1D. Interacts with UBTF.

It is found in the nucleus. Functionally, component of the transcription factor SL1/TIF-IB complex, which is involved in the assembly of the PIC (preinitiation complex) during RNA polymerase I-dependent transcription. The rate of PIC formation probably is primarily dependent on the rate of association of SL1/TIF-IB with the rDNA promoter. SL1/TIF-IB is involved in stabilization of nucleolar transcription factor 1/UBTF on rDNA. Formation of SL1/TIF-IB excludes the association of TBP with TFIID subunits. This chain is TATA box-binding protein-associated factor RNA polymerase I subunit D (TAF1D), found in Homo sapiens (Human).